Here is a 79-residue protein sequence, read N- to C-terminus: MDNIEQRVKKIVAEQLGVAEADIKNESSFVNDLGADSLDTVELVMALEDEFGMEIPDEEAEKITTVQQAIDYARANVKA.

A Carrier domain is found at 2-77 (DNIEQRVKKI…QAIDYARANV (76 aa)). At S37 the chain carries O-(pantetheine 4'-phosphoryl)serine.

The protein belongs to the acyl carrier protein (ACP) family. 4'-phosphopantetheine is transferred from CoA to a specific serine of apo-ACP by AcpS. This modification is essential for activity because fatty acids are bound in thioester linkage to the sulfhydryl of the prosthetic group.

The protein resides in the cytoplasm. It participates in lipid metabolism; fatty acid biosynthesis. In terms of biological role, carrier of the growing fatty acid chain in fatty acid biosynthesis. The chain is Acyl carrier protein 1 from Ralstonia nicotianae (strain ATCC BAA-1114 / GMI1000) (Ralstonia solanacearum).